Here is a 523-residue protein sequence, read N- to C-terminus: Protein tweety homolog 3 (523 aa).

Residues 1 to 42 (MAGVSYAAPWWVSLLHRLPHFDLSWEATSSQFRPEDTDYQQA) lie on the Extracellular side of the membrane. A helical membrane pass occupies residues 43-63 (LLLLGAAALACLALDLLFLLF). Residues 64–86 (YSFWLCCRRRKSEEHLDADCCCT) lie on the Cytoplasmic side of the membrane. Residues 87–107 (AWCVIIATLVCSAGIAVGFYG) form a helical membrane-spanning segment. Residues 108-211 (NGETSDGIHR…VDLYDWYRWL (104 aa)) lie on the Extracellular side of the membrane. Ca(2+) contacts are provided by glutamate 110 and aspartate 113. 2 N-linked (GlcNAc...) asparagine glycosylation sites follow: asparagine 126 and asparagine 144. Residues 212 to 232 (GYLGLLLLDVIICLLVLVGLI) form a helical membrane-spanning segment. Residues 233–236 (RSSK) lie on the Cytoplasmic side of the membrane. The helical transmembrane segment at 237 to 257 (GILVGVCLLGVLALVISWGAL) threads the bilayer. The Extracellular portion of the chain corresponds to 258–386 (GLELAVSVGS…LTGFCYDGVE (129 aa)). Disulfide bonds link cysteine 271–cysteine 381 and cysteine 299–cysteine 366. Asparagine 351 is a glycosylation site (N-linked (GlcNAc...) asparagine). Residues 387–407 (GLIYLALFSFVTALMFSSIVC) traverse the membrane as a helical segment. Topologically, residues 408 to 523 (SVPHTWQQKR…QPRPDSSGSH (116 aa)) are cytoplasmic. 2 disordered regions span residues 413-435 (WQQKRGPDEDGEEEAAPGPRQAH) and 482-523 (QNPR…SGSH). The residue at position 496 (serine 496) is a Phosphoserine. Residues 498 to 501 (PPSY) carry the PY-motif; mediates interaction with NEDD4L motif. Residues 501–523 (YTSSMRAKYLATSQPRPDSSGSH) show a composition bias toward polar residues. Phosphoserine is present on residues serine 504 and serine 522.

It belongs to the tweety family. As to quaternary structure, homotetramer; disulfide-linked. Homodimer. Interacts with NEDD4L. Ubiquitinated by NEDD4L. Post-translationally, N-Glycosylated. Contains high-mannose, hybrid and complex oligosaccharides. In terms of tissue distribution, expressed in excitable tissues. Expressed in the brain, heart, skeletal muscle, colon, spleen, kidney and peripheral blood leukocytes.

Its subcellular location is the cell membrane. It catalyses the reaction chloride(in) = chloride(out). The catalysed reaction is L-glutamate(out) = L-glutamate(in). Its function is as follows. Calcium-independent, swelling-dependent volume-regulated anion channel (VRAC-swell) which plays a pivotal role in the process of regulatory volume decrease (RVD) in the brain through the efflux of anions like chloride and organic osmolytes like glutamate. Probable large-conductance Ca(2+)-activated chloride channel. The protein is Protein tweety homolog 3 (TTYH3) of Homo sapiens (Human).